Reading from the N-terminus, the 130-residue chain is Holo-[acyl-carrier-protein] synthase (130 aa).

2 residues coordinate Mg(2+): Asp9 and Glu58.

Belongs to the P-Pant transferase superfamily. AcpS family. The cofactor is Mg(2+).

The protein localises to the cytoplasm. The enzyme catalyses apo-[ACP] + CoA = holo-[ACP] + adenosine 3',5'-bisphosphate + H(+). Transfers the 4'-phosphopantetheine moiety from coenzyme A to a Ser of acyl-carrier-protein. In Mycolicibacterium smegmatis (strain ATCC 700084 / mc(2)155) (Mycobacterium smegmatis), this protein is Holo-[acyl-carrier-protein] synthase.